The sequence spans 125 residues: MADLAKIVEDLSSLTVLEAAELAKLLEEKWGVSAAAAVAVAAGPAAGAGAAAVEEQTEFTVVLASAGDKKIEVIKEVRAITGLGLKEAKDLVEGAPKPVKEGATKDEAEKLKAQLEKAGAKVELK.

This sequence belongs to the bacterial ribosomal protein bL12 family. In terms of assembly, homodimer. Part of the ribosomal stalk of the 50S ribosomal subunit. Forms a multimeric L10(L12)X complex, where L10 forms an elongated spine to which 2 to 4 L12 dimers bind in a sequential fashion. Binds GTP-bound translation factors.

Forms part of the ribosomal stalk which helps the ribosome interact with GTP-bound translation factors. Is thus essential for accurate translation. The polypeptide is Large ribosomal subunit protein bL12 (Methylorubrum extorquens (strain CM4 / NCIMB 13688) (Methylobacterium extorquens)).